Here is a 505-residue protein sequence, read N- to C-terminus: Lysine--tRNA ligase (505 aa).

Mg(2+) is bound by residues E415 and E422.

It belongs to the class-II aminoacyl-tRNA synthetase family. As to quaternary structure, homodimer. The cofactor is Mg(2+).

The protein resides in the cytoplasm. It catalyses the reaction tRNA(Lys) + L-lysine + ATP = L-lysyl-tRNA(Lys) + AMP + diphosphate. The polypeptide is Lysine--tRNA ligase (Edwardsiella ictaluri (strain 93-146)).